The primary structure comprises 637 residues: MNPSPLLDLIDSPQDLRRLDKKQLPRLAGELRAFLLESVGQTGGHFASNLGAVELTIALHYVYDTPEDKLVWDVGHQSYPHKILTGRKNQMHTMRQYGGLAGFPKRSESEYDAFGVGHSSTSIGAALGMAVADKQLGNNRRSVAIIGDGAMTAGQAFEALNCAGDMDVDLLVVLNDNEMSISPNVGALPKYLASNVVRDMHGLLSTVKAQTGKVLDKIPGAMEFAQKVEHKIKTLAEEAEHAKQSLSLFENFGFRYTGPVDGHNVENLVDVLKDLRSRKGPQLLHVITKKGNGYKLAENDPVKYHAVAKLPKEGAAQMPSEKEPKPVAKPTYTQVFGKWLCDRAAADERLIAITPAMREGSGLVEFEQRFPDRYFDVGIAEQHAVTFAGGLACEGMKPVVAIYSTFLQRAYDQLVHDIALQNLPVLFAVDRAGIVGADGPTHAGLYDLSFLRCIPNMIVAAPSDENECRLLLSTCYQADAPAAVRYPRGTGTGAPVSDGMETVEIGKGIIRREGGKTAFIAFGSMVAPALAVAGKLNATVADMRFVKPIDEELIVRLARSHDRIVTLEENAEQGGAGGAVLEVLAKHGICKPVLLLGVADTVTGHGDPKKLLDDLGLSAEAVERRVRAWLSDRDAAN.

Thiamine diphosphate-binding positions include His76 and 117 to 119 (GHS). Asp148 lines the Mg(2+) pocket. Thiamine diphosphate contacts are provided by residues 149-150 (GA), Asn177, Tyr294, and Glu381. Asn177 lines the Mg(2+) pocket.

Belongs to the transketolase family. DXPS subfamily. Homodimer. Mg(2+) is required as a cofactor. Requires thiamine diphosphate as cofactor.

It carries out the reaction D-glyceraldehyde 3-phosphate + pyruvate + H(+) = 1-deoxy-D-xylulose 5-phosphate + CO2. The protein operates within metabolic intermediate biosynthesis; 1-deoxy-D-xylulose 5-phosphate biosynthesis; 1-deoxy-D-xylulose 5-phosphate from D-glyceraldehyde 3-phosphate and pyruvate: step 1/1. In terms of biological role, catalyzes the acyloin condensation reaction between C atoms 2 and 3 of pyruvate and glyceraldehyde 3-phosphate to yield 1-deoxy-D-xylulose-5-phosphate (DXP). The chain is 1-deoxy-D-xylulose-5-phosphate synthase from Neisseria meningitidis serogroup C / serotype 2a (strain ATCC 700532 / DSM 15464 / FAM18).